The sequence spans 455 residues: Golgi pH regulator A (455 aa).

The next 5 helical transmembrane spans lie at I5–F25, V46–L66, L79–V99, C114–L134, and V150–P170. N-linked (GlcNAc...) asparagine glycosylation is found at N180 and N243. Helical transmembrane passes span G290–F310, I343–L363, V378–I398, and W425–H445.

The protein belongs to the Golgi pH regulator (TC 1.A.38) family. In terms of assembly, homotrimer. Interacts with RABL3; the interaction stabilizes GPR89A. Ubiquitous.

The protein resides in the golgi apparatus membrane. It catalyses the reaction iodide(out) = iodide(in). The enzyme catalyses chloride(in) = chloride(out). It carries out the reaction bromide(in) = bromide(out). The catalysed reaction is fluoride(in) = fluoride(out). Functionally, voltage-gated channel that enables the transfer of monoatomic anions such as iodide, chloride, bromide and fluoride which may function in counter-ion conductance and participates in Golgi acidification. Plays a role in lymphocyte development, probably by acting as a RABL3 effector in hematopoietic cells. The polypeptide is Golgi pH regulator A (Homo sapiens (Human)).